Reading from the N-terminus, the 283-residue chain is NAD kinase (283 aa).

The active-site Proton acceptor is the Asp-73. Residues 73–74, 146–147, His-157, His-176, Asp-178, 189–194, and Ala-213 contribute to the NAD(+) site; these read DG, NE, and TAYNLS.

The protein belongs to the NAD kinase family. A divalent metal cation serves as cofactor.

The protein resides in the cytoplasm. It carries out the reaction NAD(+) + ATP = ADP + NADP(+) + H(+). Involved in the regulation of the intracellular balance of NAD and NADP, and is a key enzyme in the biosynthesis of NADP. Catalyzes specifically the phosphorylation on 2'-hydroxyl of the adenosine moiety of NAD to yield NADP. This is NAD kinase from Haloarcula marismortui (strain ATCC 43049 / DSM 3752 / JCM 8966 / VKM B-1809) (Halobacterium marismortui).